We begin with the raw amino-acid sequence, 238 residues long: Probable 2-phosphosulfolactate phosphatase (238 aa).

The protein belongs to the ComB family. The cofactor is Mg(2+).

The catalysed reaction is (2R)-O-phospho-3-sulfolactate + H2O = (2R)-3-sulfolactate + phosphate. This Clostridium botulinum (strain Eklund 17B / Type B) protein is Probable 2-phosphosulfolactate phosphatase.